The sequence spans 1015 residues: DNA polymerase catalytic subunit (1015 aa).

This sequence belongs to the DNA polymerase type-B family. Forms a complex with the ssDNA-binding protein BALF2, the DNA polymerase processivity factor BMRF1, and the alkaline exonuclease BGLF5. Interacts with the putative helicase-primase complex composed of BBLF4, BSLF1 and BBLF2/3 proteins; these interactions may coordinate leading and lagging strand DNA synthesis at the replication fork.

Its subcellular location is the host nucleus. The catalysed reaction is DNA(n) + a 2'-deoxyribonucleoside 5'-triphosphate = DNA(n+1) + diphosphate. Replicates viral genomic DNA in the late phase of lytic infection, producing long concatemeric DNA. The replication complex is composed of six viral proteins: the DNA polymerase, processivity factor, primase, primase-associated factor, helicase, and ssDNA-binding protein. The protein is DNA polymerase catalytic subunit of Epstein-Barr virus (strain B95-8) (HHV-4).